The primary structure comprises 80 residues: Turripeptide VI/VII-01 (80 aa).

An N-terminal signal peptide occupies residues 1-22 (MRLQLILTITLLLTSFMGYRDA). A propeptide spanning residues 23-36 (AVIQGKTERSAMKM) is cleaved from the precursor. Disulfide bonds link C48-C61, C50-C65, and C60-C70. The propeptide occupies 77 to 80 (SSAI).

In terms of tissue distribution, expressed by the venom duct.

The protein localises to the secreted. This Gemmula speciosa (Splendid gem-turris) protein is Turripeptide VI/VII-01.